The chain runs to 93 residues: Transcription factor PRE3 (93 aa).

One can recognise a bHLH domain in the interval 6–61 (SRSRQSSGTSRISEDQINDLIIKLQQLLPELRDSRRSDKVSAARVLQDTCNYIRNL).

Homodimer. Interacts with BHLH 147, BHLH148, BHLH149, BHLH150 and IBH1. Interacts with SIEL. As to expression, expressed in root and shoot meristems, and young siliques. Low levels detected in all aerial tissues.

It localises to the nucleus. Its subcellular location is the cytoplasm. Functionally, atypical and probable non DNA-binding bHLH transcription factor required for MONOPTEROS-dependent root initiation in embryo. Promotes the correct definition of the hypophysis cell division plane. Transcriptionally controlled by MONOPTEROS. Moves from its site of synthesis in pro-embryos cells into the hypophysis. Regulates brassinosteroid (BR) signaling by sequestering negative BR signaling components. May function as positive regulator of gibberellin signaling. May play a role in the regulation of light signaling and possibly auxin signaling. This is Transcription factor PRE3 (PRE3) from Arabidopsis thaliana (Mouse-ear cress).